A 215-amino-acid chain; its full sequence is ATP phosphoribosyltransferase (215 aa).

Belongs to the ATP phosphoribosyltransferase family. Short subfamily. Heteromultimer composed of HisG and HisZ subunits.

It is found in the cytoplasm. The catalysed reaction is 1-(5-phospho-beta-D-ribosyl)-ATP + diphosphate = 5-phospho-alpha-D-ribose 1-diphosphate + ATP. It functions in the pathway amino-acid biosynthesis; L-histidine biosynthesis; L-histidine from 5-phospho-alpha-D-ribose 1-diphosphate: step 1/9. Catalyzes the condensation of ATP and 5-phosphoribose 1-diphosphate to form N'-(5'-phosphoribosyl)-ATP (PR-ATP). Has a crucial role in the pathway because the rate of histidine biosynthesis seems to be controlled primarily by regulation of HisG enzymatic activity. The protein is ATP phosphoribosyltransferase (hisG) of Clostridium acetobutylicum (strain ATCC 824 / DSM 792 / JCM 1419 / IAM 19013 / LMG 5710 / NBRC 13948 / NRRL B-527 / VKM B-1787 / 2291 / W).